A 439-amino-acid chain; its full sequence is Rho GTPase-activating protein 1 (439 aa).

N-acetylmethionine is present on M1. The segment covering 28–48 has biased composition (basic and acidic residues); it reads IDEKNWPSDEMPDFPKSDDSK. The segment at 28–55 is disordered; sequence IDEKNWPSDEMPDFPKSDDSKSSSPEPV. Residues S44, S47, S50, and S51 each carry the phosphoserine modification. In terms of domain architecture, CRAL-TRIO spans 63 to 218; that stretch reads PYYDIARHQI…QVLKYDDFLK (156 aa). Y65 is subject to Phosphotyrosine. At K80 the chain carries N6-acetyllysine. Residues 228 to 238 carry the SH3-binding motif; the sequence is PKPMPPRPPLP. The region spanning 244–431 is the Rho-GAP domain; it reads VSLQHLQEKS…FLLDHQGELF (188 aa).

In terms of assembly, found in a complex with XPO7, EIF4A1, ARHGAP1, VPS26A, VPS29, VPS35 and SFN. Interacts with BNIPL.

The protein localises to the cytoplasm. Its function is as follows. GTPase activator for the Rho, Rac and Cdc42 proteins, converting them to the putatively inactive GDP-bound state. Cdc42 seems to be the preferred substrate. This chain is Rho GTPase-activating protein 1 (Arhgap1), found in Mus musculus (Mouse).